Consider the following 801-residue polypeptide: Phenylalanine--tRNA ligase beta subunit (801 aa).

Residues 39 to 153 (AEGLSKLVVG…EDAVPGESIF (115 aa)) enclose the tRNA-binding domain. A B5 domain is found at 406 to 481 (TDDIQVSTSL…RIYGYDKLPT (76 aa)). Aspartate 459, aspartate 465, glutamate 468, and glutamate 469 together coordinate Mg(2+). The region spanning 708–801 (TKFPAVSRDI…LTEKVGAEVR (94 aa)) is the FDX-ACB domain.

The protein belongs to the phenylalanyl-tRNA synthetase beta subunit family. Type 1 subfamily. In terms of assembly, tetramer of two alpha and two beta subunits. Mg(2+) serves as cofactor.

The protein resides in the cytoplasm. The catalysed reaction is tRNA(Phe) + L-phenylalanine + ATP = L-phenylalanyl-tRNA(Phe) + AMP + diphosphate + H(+). This chain is Phenylalanine--tRNA ligase beta subunit, found in Streptococcus mutans serotype c (strain ATCC 700610 / UA159).